Consider the following 220-residue polypeptide: Urease accessory protein UreF (220 aa).

The protein belongs to the UreF family. UreD, UreF and UreG form a complex that acts as a GTP-hydrolysis-dependent molecular chaperone, activating the urease apoprotein by helping to assemble the nickel containing metallocenter of UreC. The UreE protein probably delivers the nickel.

The protein localises to the cytoplasm. Functionally, required for maturation of urease via the functional incorporation of the urease nickel metallocenter. This Bordetella parapertussis (strain 12822 / ATCC BAA-587 / NCTC 13253) protein is Urease accessory protein UreF.